The following is a 509-amino-acid chain: MTQQNAQSTSEPTISENDLIAQRHAKLKQIQDVAKETGKSPWPNTFKREHYAADLQEQFKDQSKEQIESAEHVYVKVAGRVMLNRGSFMVIQDMTGRIQLYVDRKGLPKDTLETIKGLDLGDIIAAEGYIGRSGKGDLYVHLEGFELLTKSLRPLPDKFHGLNDTEVKYRKRYLDLIVNEETRKTFEIRAKVVAGIRAFLTNERFMEVETPMMHVIPGGASARPFETHHNALDMPLFLRIAPELYLKRLVVGGFERVFEINRNFRNEGVSTRHNPEFTMIEFYQAYADYKDLMALTENMLEKLALDILGTTDVPYQGEVFSFKGPFKKISMFDAILENNPQFTPENVGDREFLAKFVREELKEEVKPGFGLGKLQTIVFEETVETKLRQPTFITEYPAETSPLARRNDDNPHITDRFEFFIGGRELANGFSELNDPIDQAERFQAQVAEKDAGDDEAMHYDAEFVEALEYGLPPTAGEGIGIDRLVMLFADAPSIRDVILFPHMRRKEG.

Mg(2+)-binding residues include glutamate 418 and glutamate 425.

The protein belongs to the class-II aminoacyl-tRNA synthetase family. Homodimer. Mg(2+) is required as a cofactor.

Its subcellular location is the cytoplasm. The enzyme catalyses tRNA(Lys) + L-lysine + ATP = L-lysyl-tRNA(Lys) + AMP + diphosphate. This chain is Lysine--tRNA ligase, found in Acinetobacter baumannii (strain AB307-0294).